The sequence spans 549 residues: MAAKDIRFGEDARSRMVRGVNVLANAVKATLGPKGRNVVLEKSFGAPTITKDGVSVAKEIELADKFENMGAQMVKEVASRTNDDAGDGTTTATVLAQALIREGAKAVAAGMNPMDLKRGIDKAVVAAVNELKSISKPTADDKAIAQVGTISANSDESIGQIIADAMKEVGKEGVITVEEGSGLDNELDVVKGMQFDRGYLSPYFINNQQSQTADLDDPFILLHDKKISNVRDLLPVLEGVAKAGKPLLIVAEEVEGEALATLVVNTIRGIVKVVAVKAPGFGDRRKAMLEDMAVLTGGTVISEEVGLSLEKATIKDLGRAKKVQVSKENTTIIDGVGDKAAVDSRVAQIKTQIQDTSSDYDREKLQERVAKLAGGVAVIKVGASTEIEMKEKKDRVDDALHATRAAVEEGVVPGGGVALVRAVSALAGLKGANEDQNHGIQIALRAMEAPLREIVANAGEEPSVIVNKVKEGTGSFGYNAATGEFGDMLQFGILDPTKVTRSALQNAASIAGLMITTEAMVAEAPKKDEPAMGGAGGMGGMGGMGGMDF.

Residues 30–33, Lys-51, 87–91, Gly-415, 479–481, and Asp-495 contribute to the ATP site; these read TLGP, DGTTT, and NAA.

Belongs to the chaperonin (HSP60) family. Forms a cylinder of 14 subunits composed of two heptameric rings stacked back-to-back. Interacts with the co-chaperonin GroES.

It localises to the cytoplasm. The enzyme catalyses ATP + H2O + a folded polypeptide = ADP + phosphate + an unfolded polypeptide.. Functionally, together with its co-chaperonin GroES, plays an essential role in assisting protein folding. The GroEL-GroES system forms a nano-cage that allows encapsulation of the non-native substrate proteins and provides a physical environment optimized to promote and accelerate protein folding. In Stenotrophomonas maltophilia (strain R551-3), this protein is Chaperonin GroEL.